The chain runs to 60 residues: MSRSGKIRSASWQAAVRSLKAVQSSRRFRTSSFSSSRRLRSSRHCCQTPIAVCQVRIRKR.

This is an uncharacterized protein from Homo sapiens (Human).